Reading from the N-terminus, the 384-residue chain is Mitogen-activated protein kinase homolog 1 (384 aa).

One can recognise a Protein kinase domain in the interval Tyr32–Met319. ATP contacts are provided by residues Ile38 to Val46 and Lys61. Residue Asp158 is the Proton acceptor of the active site. A Phosphothreonine modification is found at Thr191. Positions Thr191–Tyr193 match the TXY motif. A Phosphotyrosine modification is found at Tyr193.

It belongs to the protein kinase superfamily. CMGC Ser/Thr protein kinase family. MAP kinase subfamily. It depends on Mg(2+) as a cofactor. In terms of processing, dually phosphorylated on Thr-191 and Tyr-193, which activates the enzyme. In terms of tissue distribution, expressed in vegetative organs such as leaf, root, or stem. In the reproductive organs, it is found in the ovary, but not in the stamen.

The catalysed reaction is L-seryl-[protein] + ATP = O-phospho-L-seryl-[protein] + ADP + H(+). It carries out the reaction L-threonyl-[protein] + ATP = O-phospho-L-threonyl-[protein] + ADP + H(+). Its activity is regulated as follows. Activated by tyrosine and threonine phosphorylation. This Petunia hybrida (Petunia) protein is Mitogen-activated protein kinase homolog 1 (MPK1).